The primary structure comprises 370 residues: Isopentenyl-diphosphate delta-isomerase (370 aa).

8–9 (RK) contributes to the substrate binding site. FMN is bound by residues T65, 66-68 (GMT), S99, and N127. Residue 99-101 (SQR) coordinates substrate. Residue Q166 coordinates substrate. E167 is a binding site for Mg(2+). Residues K198, S223, T228, 277 to 279 (GMR), and 298 to 299 (AL) contribute to the FMN site.

It belongs to the IPP isomerase type 2 family. As to quaternary structure, homooctamer. Dimer of tetramers. FMN serves as cofactor. Requires NADPH as cofactor. It depends on Mg(2+) as a cofactor.

The protein resides in the cytoplasm. The catalysed reaction is isopentenyl diphosphate = dimethylallyl diphosphate. Involved in the biosynthesis of isoprenoids. Catalyzes the 1,3-allylic rearrangement of the homoallylic substrate isopentenyl (IPP) to its allylic isomer, dimethylallyl diphosphate (DMAPP). This chain is Isopentenyl-diphosphate delta-isomerase, found in Pyrococcus abyssi (strain GE5 / Orsay).